The chain runs to 591 residues: Pentatricopeptide repeat-containing protein At2g35130 (591 aa).

PPR repeat units follow at residues 154 to 188, 189 to 223, 227 to 262, 263 to 297, 298 to 332, 333 to 367, 368 to 402, 403 to 437, 438 to 472, 473 to 507, 508 to 542, and 543 to 573; these read DVICFNLLIDAYGQKFQYKEAESLYVQLLESRYVP, TEDTYALLIKAYCMAGLIERAEVVLVEMQNHHVSP, GVTVYNAYIEGLMKRKGNTEEAIDVFQRMKRDRCKP, TTETYNLMINLYGKASKSYMSWKLYCEMRSHQCKP, NICTYTALVNAFAREGLCEKAEEIFEQLQEDGLEP, DVYVYNALMESYSRAGYPYGAAEIFSLMQHMGCEP, DRASYNIMVDAYGRAGLHSDAEAVFEEMKRLGIAP, TMKSHMLLLSAYSKARDVTKCEAIVKEMSENGVEP, DTFVLNSMLNLYGRLGQFTKMEKILAEMENGPCTA, DISTYNILINIYGKAGFLERIEELFVELKEKNFRP, DVVTWTSRIGAYSRKKLYVKCLEVFEEMIDSGCAP, and DGGTAKVLLSACSSEEQVEQVTSVLRTMHKG.

The protein belongs to the PPR family. P subfamily.

In Arabidopsis thaliana (Mouse-ear cress), this protein is Pentatricopeptide repeat-containing protein At2g35130.